Here is a 124-residue protein sequence, read N- to C-terminus: Small ribosomal subunit protein uS13 (124 aa).

The span at 103-117 (KCNARTRKGPRKTVA) shows a compositional bias: basic residues. The disordered stretch occupies residues 103-124 (KCNARTRKGPRKTVANKKIETK).

It belongs to the universal ribosomal protein uS13 family. Part of the 30S ribosomal subunit. Forms a loose heterodimer with protein S19. Forms two bridges to the 50S subunit in the 70S ribosome.

Located at the top of the head of the 30S subunit, it contacts several helices of the 16S rRNA. In the 70S ribosome it contacts the 23S rRNA (bridge B1a) and protein L5 of the 50S subunit (bridge B1b), connecting the 2 subunits; these bridges are implicated in subunit movement. Contacts the tRNAs in the A and P-sites. The sequence is that of Small ribosomal subunit protein uS13 from Malacoplasma penetrans (strain HF-2) (Mycoplasma penetrans).